The chain runs to 483 residues: ATP-dependent RNA helicase DDX25 (483 aa).

Residue threonine 49 is modified to Phosphothreonine. The Nuclear export signal motif lies at leucine 61–serine 74. Positions lysine 97–glutamate 125 match the Q motif motif. The Nuclear localization signal motif lies at glutamate 100–alanine 114. The region spanning methionine 130 to isoleucine 300 is the Helicase ATP-binding domain. Position 143–150 (serine 143–threonine 150) interacts with ATP. The DEAD box motif lies at aspartate 247–aspartate 250. The Helicase C-terminal domain occupies asparagine 311 to isoleucine 478.

Belongs to the DEAD box helicase family. Post-translationally, phosphorylated on threonine residues. The phosphorylated form is found in the cytoplasm but not in the nucleus. Isoform 1 is expressed in germ cells. Isoform 2 is highly expressed in Leydig cells and weakly expressed in the pituitary and hypothalamus. Isoform 3 is weakly expressed only in germ cells.

The protein localises to the cytoplasm. It is found in the nucleus. It catalyses the reaction ATP + H2O = ADP + phosphate + H(+). Functionally, ATP-dependent RNA helicase. Required for mRNA export and translation regulation during spermatid development. The chain is ATP-dependent RNA helicase DDX25 (Ddx25) from Rattus norvegicus (Rat).